Here is a 180-residue protein sequence, read N- to C-terminus: Large ribosomal subunit protein uL6 (180 aa).

Belongs to the universal ribosomal protein uL6 family. In terms of assembly, part of the 50S ribosomal subunit.

In terms of biological role, this protein binds to the 23S rRNA, and is important in its secondary structure. It is located near the subunit interface in the base of the L7/L12 stalk, and near the tRNA binding site of the peptidyltransferase center. The protein is Large ribosomal subunit protein uL6 of Thermus aquaticus.